Here is a 683-residue protein sequence, read N- to C-terminus: Zinc finger protein 418 (683 aa).

The region spanning 48–123 (VTIEDVTVYF…TPKQGQLRQK (76 aa)) is the KRAB domain. The span at 102-120 (QSLSQTEAPQVRTPKQGQL) shows a compositional bias: polar residues. Disordered regions lie at residues 102–124 (QSLS…RQKP) and 209–247 (DIPN…QHRL). Residues 225 to 239 (FHRDKNNSESDEYKK) are compositionally biased toward basic and acidic residues. 14 C2H2-type zinc fingers span residues 287-309 (YECH…QRRH), 315-337 (YKCG…CRVH), 343-365 (FECL…QRTH), 371-393 (YECS…QRTH), 399-421 (YECG…QRVH), 427-449 (YHCE…SKIH), 455-477 (YECG…QRTH), 483-505 (YECR…RRIH), 511-533 (YECE…QRVH), 539-561 (YKCE…QRTH), 567-589 (YECA…QKIH), 595-617 (YHCD…QRVH), 623-645 (YTCG…RRIH), and 651-673 (YECD…QLLH).

This sequence belongs to the krueppel C2H2-type zinc-finger protein family.

It is found in the nucleus. In terms of biological role, transcriptional repressor. May play a role as regulator of the ubiquitin-proteasome system and autophagy-lysosomal pathway. This is Zinc finger protein 418 from Rattus norvegicus (Rat).